The chain runs to 376 residues: Multicilin (376 aa).

Positions 165–213 (EQYWRDVADHNQKALGDALVENNQLQVSLTEKQEEIASLKEKNIQLNEL) form a coiled coil. Residues 230 to 261 (ERPKHSSGATQGRLPVKRSLEDFYPQSNEPDS) are disordered. Positions 331–376 (TELEEDVSFRTSIKEHSTIRTLAFPQGNAFTIRTAAGGYKFRWVPN) are TIRT domain.

Belongs to the geminin family. In terms of assembly, component of the EDM complex, at least composed of e2f4, e2f5, mcidas and tfdp1.

It is found in the nucleus. Its function is as follows. Transcription regulator specifically required for multiciliate cell differentiation. Acts in a multiprotein complex containing e2f4 and e2f5 that binds and activate genes required for centriole biogenesis. Activates genes required for centriole assembly (plk4, cep152) and genes specifically required for motile cilia formation (foxj1). Also promotes the deuterosome pathway of centriole biogenesis by activating expression of deup1, but not its paralog cep63. In Xenopus tropicalis (Western clawed frog), this protein is Multicilin (mcidas).